A 235-amino-acid polypeptide reads, in one-letter code: Transcriptional regulatory protein WalR (235 aa).

A Response regulatory domain is found at 4-117; it reads KILVVDDEKP…ELLARVKANL (114 aa). Aspartate 53 bears the 4-aspartylphosphate mark. A DNA-binding region (ompR/PhoB-type) is located at residues 132–231; it reads SNEIHIGSLV…RRGVGYYLRN (100 aa).

As to quaternary structure, homodimer. Post-translationally, phosphorylated by WalK.

It localises to the cytoplasm. Its function is as follows. Member of the two-component regulatory system WalK/WalR involved in the regulation of the ftsAZ operon, the yocH, ykvT, cwlO, lytE, ydjM, yjeA, yoeB genes and the tagAB and tagDEF operons. Binds to the ftsAZ P1 promoter sequence in vitro. WalR has been shown to directly bind to the regulatory regions of yocH, ykvT, tagAB/tagDEF. Activates cwlO, lytE and ydjM and represses yoeB and yjeA. In Bacillus subtilis (strain 168), this protein is Transcriptional regulatory protein WalR.